The following is a 268-amino-acid chain: Glucosamine-6-phosphate deaminase (268 aa).

The Proton acceptor; for enolization step role is filled by D67. N137 acts as the For ring-opening step in catalysis. The Proton acceptor; for ring-opening step role is filled by H139. The active-site For ring-opening step is E144.

The protein belongs to the glucosamine/galactosamine-6-phosphate isomerase family. NagB subfamily. As to quaternary structure, homohexamer.

It catalyses the reaction alpha-D-glucosamine 6-phosphate + H2O = beta-D-fructose 6-phosphate + NH4(+). The protein operates within amino-sugar metabolism; N-acetylneuraminate degradation; D-fructose 6-phosphate from N-acetylneuraminate: step 5/5. In terms of biological role, catalyzes the reversible isomerization-deamination of glucosamine 6-phosphate (GlcN6P) to form fructose 6-phosphate (Fru6P) and ammonium ion. The protein is Glucosamine-6-phosphate deaminase of Colwellia psychrerythraea (strain 34H / ATCC BAA-681) (Vibrio psychroerythus).